Consider the following 144-residue polypeptide: uncharacterized protein (144 aa).

Residues 4–111 (VFCAIIAGEA…LPPRNGDKLS (108 aa)) enclose the HIT domain. A Histidine triad motif motif is present at residues 96-100 (HVHLH).

This is an uncharacterized protein from Mycobacterium tuberculosis (strain CDC 1551 / Oshkosh).